We begin with the raw amino-acid sequence, 255 residues long: Mediator of RNA polymerase II transcription subunit 18 (255 aa).

The protein belongs to the Mediator complex subunit 18 family. Component of the Mediator complex.

The protein resides in the nucleus. In terms of biological role, component of the Mediator complex, a coactivator involved in the regulated transcription of nearly all RNA polymerase II-dependent genes. Mediator functions as a bridge to convey information from gene-specific regulatory proteins to the basal RNA polymerase II transcription machinery. Mediator is recruited to promoters by direct interactions with regulatory proteins and serves as a scaffold for the assembly of a functional preinitiation complex with RNA polymerase II and the general transcription factors. The chain is Mediator of RNA polymerase II transcription subunit 18 (SRB5) from Kluyveromyces lactis (strain ATCC 8585 / CBS 2359 / DSM 70799 / NBRC 1267 / NRRL Y-1140 / WM37) (Yeast).